A 176-amino-acid polypeptide reads, in one-letter code: Peroxiredoxin AHP1 (176 aa).

Position 2 is an N-acetylserine (S2). The Thioredoxin domain occupies 9 to 176 (FPAGDYKFQY…SSVESVLAHL (168 aa)). S28 is modified (phosphoserine). A Glycyl lysine isopeptide (Lys-Gly) (interchain with G-Cter in URM1) cross-link involves residue K32. K48 participates in a covalent cross-link: Glycyl lysine isopeptide (Lys-Gly) (interchain with G-Cter in ubiquitin); alternate. Residue K48 forms a Glycyl lysine isopeptide (Lys-Gly) (interchain with G-Cter in URM1); alternate linkage. The residue at position 59 (S59) is a Phosphoserine. Residue C62 is the Cysteine sulfenic acid (-SOH) intermediate of the active site. C62 carries the post-translational modification Cysteine persulfide. K79 is covalently cross-linked (Glycyl lysine isopeptide (Lys-Gly) (interchain with G-Cter in URM1)). K81 is covalently cross-linked (Glycyl lysine isopeptide (Lys-Gly) (interchain with G-Cter in ubiquitin); alternate). Residue K81 forms a Glycyl lysine isopeptide (Lys-Gly) (interchain with G-Cter in URM1); alternate linkage. K107 participates in a covalent cross-link: Glycyl lysine isopeptide (Lys-Gly) (interchain with G-Cter in URM1). A Glycyl lysine isopeptide (Lys-Gly) (interchain with G-Cter in ubiquitin) cross-link involves residue K113. At S116 the chain carries Phosphoserine. Residue C120 is modified to Cysteine persulfide. Residue K124 forms a Glycyl lysine isopeptide (Lys-Gly) (interchain with G-Cter in URM1) linkage. Residue K156 forms a Glycyl lysine isopeptide (Lys-Gly) (interchain with G-Cter in URM1); alternate linkage. A Glycyl lysine isopeptide (Lys-Gly) (interchain with G-Cter in SUMO); alternate cross-link involves residue K156.

The protein belongs to the peroxiredoxin family. Prx5 subfamily. Homodimer; disulfide-linked, upon oxidation. Conjugated to URM1, a ubiquitin-like protein, in response to oxidative stresses. The attachment of URM1 to lysine residues exclusively depends on the presence of a peroxidatic cysteine in the target protein, with low specificity for the particular residue, motif, or structural context at which urmylation can occur. The URM1-conjugation reaction is mechanistically and directly coupled to the process of cysteine persulfidation, transfering the sulfur atom of the URM1 thiocarboxyl group to redox-active cysteine residues in the target protein if it is exposed to oxidative conditions. Post-translationally, persulfidated on specific redox-active cysteine residues. Persulfidation (also called protein S-sulfhydration) may provide a molecular mechanism that enables cells to protect vulnerable cysteine residues from reactive oxygen species (ROS) under stress conditions.

The protein localises to the cytoplasm. It carries out the reaction a hydroperoxide + [thioredoxin]-dithiol = an alcohol + [thioredoxin]-disulfide + H2O. In terms of biological role, thiol-specific peroxidase that catalyzes the reduction of hydrogen peroxide and organic hydroperoxides to water and alcohols, respectively. Plays a role in cell protection against oxidative stress by detoxifying peroxides and as sensor of hydrogen peroxide-mediated signaling events. Preferentially eliminates organic peroxides rather than hydrogen peroxide. Relays alkyl hydroperoxides as a signal to the transcription factor CAD1/YAP2 by inducing the formation of intramolecular disulfide bonds in CAD1, which causes its nuclear accumulation and activation. Involved in cellular Mn(2+) homeostasis. This chain is Peroxiredoxin AHP1, found in Saccharomyces cerevisiae (strain ATCC 204508 / S288c) (Baker's yeast).